Here is a 297-residue protein sequence, read N- to C-terminus: Ribosomal protein L11 methyltransferase (297 aa).

Positions 150, 171, 193, and 233 each coordinate S-adenosyl-L-methionine.

This sequence belongs to the methyltransferase superfamily. PrmA family.

Its subcellular location is the cytoplasm. The enzyme catalyses L-lysyl-[protein] + 3 S-adenosyl-L-methionine = N(6),N(6),N(6)-trimethyl-L-lysyl-[protein] + 3 S-adenosyl-L-homocysteine + 3 H(+). Methylates ribosomal protein L11. The polypeptide is Ribosomal protein L11 methyltransferase (Laribacter hongkongensis (strain HLHK9)).